Here is a 142-residue protein sequence, read N- to C-terminus: Large ribosomal subunit protein uL11 (142 aa).

This sequence belongs to the universal ribosomal protein uL11 family. Part of the ribosomal stalk of the 50S ribosomal subunit. Interacts with L10 and the large rRNA to form the base of the stalk. L10 forms an elongated spine to which L12 dimers bind in a sequential fashion forming a multimeric L10(L12)X complex. Post-translationally, one or more lysine residues are methylated.

Functionally, forms part of the ribosomal stalk which helps the ribosome interact with GTP-bound translation factors. This is Large ribosomal subunit protein uL11 from Shigella boydii serotype 4 (strain Sb227).